Consider the following 330-residue polypeptide: Phosphate acyltransferase (330 aa).

The protein belongs to the PlsX family. Homodimer. Probably interacts with PlsY.

It localises to the cytoplasm. The catalysed reaction is a fatty acyl-[ACP] + phosphate = an acyl phosphate + holo-[ACP]. The protein operates within lipid metabolism; phospholipid metabolism. Functionally, catalyzes the reversible formation of acyl-phosphate (acyl-PO(4)) from acyl-[acyl-carrier-protein] (acyl-ACP). This enzyme utilizes acyl-ACP as fatty acyl donor, but not acyl-CoA. The sequence is that of Phosphate acyltransferase from Streptococcus pneumoniae (strain 70585).